Here is an 87-residue protein sequence, read N- to C-terminus: Neutrophil antibiotic peptide NP-3B (87 aa).

The N-terminal stretch at 1–19 (MRTLILLTTLLLLALHTQA) is a signal peptide. A propeptide spanning residues 20-58 (ESPQGSTKEAPDEEQDISVFFGGDKGTALQDAAVKAGVT) is cleaved from the precursor. Intrachain disulfides connect Cys-59-Cys-87, Cys-61-Cys-76, and Cys-66-Cys-86.

It belongs to the alpha-defensin family.

The protein localises to the secreted. Functionally, active in vitro against S.aureus, fungi, Gram-positive and Gram-negative bacteria and to a lesser extent against an enveloped virus. In Rattus norvegicus (Rat), this protein is Neutrophil antibiotic peptide NP-3B.